Consider the following 411-residue polypeptide: ATP-dependent Clp protease ATP-binding subunit ClpX (411 aa).

Residues 1–51 (MAKKKDEEYCSFCGMPRTQVNLMLEGVHAHICDECALRAGEVVREALQKFK) enclose the ClpX-type ZB domain. 4 residues coordinate Zn(2+): Cys10, Cys13, Cys32, and Cys35. An ATP-binding site is contributed by 119–126 (PTGTGKTL).

It belongs to the ClpX chaperone family. In terms of assembly, component of the ClpX-ClpP complex. Forms a hexameric ring that, in the presence of ATP, binds to fourteen ClpP subunits assembled into a disk-like structure with a central cavity, resembling the structure of eukaryotic proteasomes.

In terms of biological role, ATP-dependent specificity component of the Clp protease. It directs the protease to specific substrates. Can perform chaperone functions in the absence of ClpP. In Porphyromonas gingivalis (strain ATCC 33277 / DSM 20709 / CIP 103683 / JCM 12257 / NCTC 11834 / 2561), this protein is ATP-dependent Clp protease ATP-binding subunit ClpX.